Consider the following 570-residue polypeptide: Proline--tRNA ligase (570 aa).

It belongs to the class-II aminoacyl-tRNA synthetase family. ProS type 1 subfamily. Homodimer.

It localises to the cytoplasm. It catalyses the reaction tRNA(Pro) + L-proline + ATP = L-prolyl-tRNA(Pro) + AMP + diphosphate. Functionally, catalyzes the attachment of proline to tRNA(Pro) in a two-step reaction: proline is first activated by ATP to form Pro-AMP and then transferred to the acceptor end of tRNA(Pro). As ProRS can inadvertently accommodate and process non-cognate amino acids such as alanine and cysteine, to avoid such errors it has two additional distinct editing activities against alanine. One activity is designated as 'pretransfer' editing and involves the tRNA(Pro)-independent hydrolysis of activated Ala-AMP. The other activity is designated 'posttransfer' editing and involves deacylation of mischarged Ala-tRNA(Pro). The misacylated Cys-tRNA(Pro) is not edited by ProRS. This is Proline--tRNA ligase from Wolinella succinogenes (strain ATCC 29543 / DSM 1740 / CCUG 13145 / JCM 31913 / LMG 7466 / NCTC 11488 / FDC 602W) (Vibrio succinogenes).